Reading from the N-terminus, the 368-residue chain is tRNA-specific 2-thiouridylase MnmA (368 aa).

Residues 12–19 (GMSGGVDS) and M38 each bind ATP. Residues 98–100 (NPD) are interaction with target base in tRNA. C103 serves as the catalytic Nucleophile. A disulfide bond links C103 and C200. Position 128 (G128) interacts with ATP. Positions 150-152 (KDQ) are interaction with tRNA. C200 functions as the Cysteine persulfide intermediate in the catalytic mechanism. An interaction with tRNA region spans residues 313–314 (RY).

The protein belongs to the MnmA/TRMU family. As to quaternary structure, interacts with TusE.

The protein localises to the cytoplasm. It carries out the reaction S-sulfanyl-L-cysteinyl-[protein] + uridine(34) in tRNA + AH2 + ATP = 2-thiouridine(34) in tRNA + L-cysteinyl-[protein] + A + AMP + diphosphate + H(+). Catalyzes the 2-thiolation of uridine at the wobble position (U34) of tRNA(Lys), tRNA(Glu) and tRNA(Gln), leading to the formation of s(2)U34, the first step of tRNA-mnm(5)s(2)U34 synthesis. Sulfur is provided by IscS, via a sulfur-relay system. Binds ATP and its substrate tRNAs. This is tRNA-specific 2-thiouridylase MnmA from Pectobacterium carotovorum subsp. carotovorum (strain PC1).